The chain runs to 341 residues: DNA-directed RNA polymerase subunit alpha (341 aa).

Positions 1–233 (MIQDEVPVSA…DLFLPFLHTE (233 aa)) are alpha N-terminal domain (alpha-NTD). The segment at 262 to 341 (DRMAKEVAFK…NLPRNKFSID (80 aa)) is alpha C-terminal domain (alpha-CTD).

It belongs to the RNA polymerase alpha chain family. In plastids the minimal PEP RNA polymerase catalytic core is composed of four subunits: alpha, beta, beta', and beta''. When a (nuclear-encoded) sigma factor is associated with the core the holoenzyme is formed, which can initiate transcription.

It is found in the plastid. Its subcellular location is the chloroplast. The catalysed reaction is RNA(n) + a ribonucleoside 5'-triphosphate = RNA(n+1) + diphosphate. Functionally, DNA-dependent RNA polymerase catalyzes the transcription of DNA into RNA using the four ribonucleoside triphosphates as substrates. The chain is DNA-directed RNA polymerase subunit alpha from Angiopteris evecta (Mule's foot fern).